The following is a 100-amino-acid chain: Urease subunit gamma (100 aa).

It belongs to the urease gamma subunit family. Heterotrimer of UreA (gamma), UreB (beta) and UreC (alpha) subunits. Three heterotrimers associate to form the active enzyme.

It is found in the cytoplasm. It carries out the reaction urea + 2 H2O + H(+) = hydrogencarbonate + 2 NH4(+). The protein operates within nitrogen metabolism; urea degradation; CO(2) and NH(3) from urea (urease route): step 1/1. The chain is Urease subunit gamma from Methylibium petroleiphilum (strain ATCC BAA-1232 / LMG 22953 / PM1).